A 442-amino-acid chain; its full sequence is Probable carboxypeptidase PAAG_00768 (442 aa).

The first 20 residues, 1–20 (MKLQYLVALLFVQAVPPVTA), serve as a signal peptide directing secretion. N-linked (GlcNAc...) asparagine glycosylation occurs at Asn-102. Position 160 (Asp-160) interacts with Zn(2+). The active-site Proton acceptor is Glu-192. Glu-193 contacts Zn(2+). Asn-343 is a glycosylation site (N-linked (GlcNAc...) asparagine).

The protein belongs to the peptidase M20A family. The cofactor is Zn(2+).

It is found in the secreted. This chain is Probable carboxypeptidase PAAG_00768, found in Paracoccidioides lutzii (strain ATCC MYA-826 / Pb01) (Paracoccidioides brasiliensis).